Here is a 403-residue protein sequence, read N- to C-terminus: Dual-specificity RNA methyltransferase RlmN (403 aa).

Glu-121 acts as the Proton acceptor in catalysis. The Radical SAM core domain occupies 127–375 (ETDRGTLCVS…VRTPRGRDIL (249 aa)). Cysteines 134 and 378 form a disulfide. 3 residues coordinate [4Fe-4S] cluster: Cys-141, Cys-145, and Cys-148. S-adenosyl-L-methionine contacts are provided by residues 204–205 (GE), Ser-236, 258–260 (SLH), and Asn-335. The active-site S-methylcysteine intermediate is the Cys-378.

Belongs to the radical SAM superfamily. RlmN family. [4Fe-4S] cluster serves as cofactor.

The protein localises to the cytoplasm. The catalysed reaction is adenosine(2503) in 23S rRNA + 2 reduced [2Fe-2S]-[ferredoxin] + 2 S-adenosyl-L-methionine = 2-methyladenosine(2503) in 23S rRNA + 5'-deoxyadenosine + L-methionine + 2 oxidized [2Fe-2S]-[ferredoxin] + S-adenosyl-L-homocysteine. The enzyme catalyses adenosine(37) in tRNA + 2 reduced [2Fe-2S]-[ferredoxin] + 2 S-adenosyl-L-methionine = 2-methyladenosine(37) in tRNA + 5'-deoxyadenosine + L-methionine + 2 oxidized [2Fe-2S]-[ferredoxin] + S-adenosyl-L-homocysteine. In terms of biological role, specifically methylates position 2 of adenine 2503 in 23S rRNA and position 2 of adenine 37 in tRNAs. m2A2503 modification seems to play a crucial role in the proofreading step occurring at the peptidyl transferase center and thus would serve to optimize ribosomal fidelity. In Rhodopseudomonas palustris (strain BisA53), this protein is Dual-specificity RNA methyltransferase RlmN.